We begin with the raw amino-acid sequence, 238 residues long: Aspartate/glutamate leucyltransferase (238 aa).

This sequence belongs to the R-transferase family. Bpt subfamily.

The protein resides in the cytoplasm. The enzyme catalyses N-terminal L-glutamyl-[protein] + L-leucyl-tRNA(Leu) = N-terminal L-leucyl-L-glutamyl-[protein] + tRNA(Leu) + H(+). It carries out the reaction N-terminal L-aspartyl-[protein] + L-leucyl-tRNA(Leu) = N-terminal L-leucyl-L-aspartyl-[protein] + tRNA(Leu) + H(+). Functionally, functions in the N-end rule pathway of protein degradation where it conjugates Leu from its aminoacyl-tRNA to the N-termini of proteins containing an N-terminal aspartate or glutamate. The polypeptide is Aspartate/glutamate leucyltransferase (Shewanella sp. (strain MR-4)).